A 348-amino-acid polypeptide reads, in one-letter code: Heat-inducible transcription repressor HrcA (348 aa).

Belongs to the HrcA family.

Its function is as follows. Negative regulator of class I heat shock genes (grpE-dnaK-dnaJ and groELS operons). Prevents heat-shock induction of these operons. The sequence is that of Heat-inducible transcription repressor HrcA from Pelotomaculum thermopropionicum (strain DSM 13744 / JCM 10971 / SI).